A 251-amino-acid chain; its full sequence is Protein DEEPER ROOTING 1 (251 aa).

Positions Ser46–Thr52 match the IGT motif motif. The stretch at Val64–Gln105 forms a coiled coil.

The protein belongs to the LAZY family.

Its function is as follows. Involved in the control of root growth angle. Involved in cell elongation in the root tip that causes asymmetric root growth and downward bending of the root in response to gravity. The chain is Protein DEEPER ROOTING 1 from Oryza sativa subsp. japonica (Rice).